Consider the following 788-residue polypeptide: Protein translocase subunit SecA 2 (788 aa).

ATP is bound by residues Gln86, 104–108, and Asp493; that span reads GEGKT.

It belongs to the SecA family. As to quaternary structure, monomer and homodimer. Part of the essential Sec protein translocation apparatus which comprises SecA, SecYEG and auxiliary proteins SecDF. Other proteins may also be involved.

It is found in the cell membrane. It localises to the cytoplasm. It carries out the reaction ATP + H2O + cellular proteinSide 1 = ADP + phosphate + cellular proteinSide 2.. Part of the Sec protein translocase complex. Interacts with the SecYEG preprotein conducting channel. Has a central role in coupling the hydrolysis of ATP to the transfer of proteins into and across the cell membrane, serving as an ATP-driven molecular motor driving the stepwise translocation of polypeptide chains across the membrane. This is Protein translocase subunit SecA 2 from Bacillus anthracis.